A 464-amino-acid chain; its full sequence is Alpha-amylase (464 aa).

The first 21 residues, 1–21, serve as a signal peptide directing secretion; that stretch reads MKNTAGILAIAGMLIAPLAHA. Substrate is bound by residues H107 and R213. The Nucleophile role is filled by D215. Residue 218 to 219 coordinates substrate; the sequence is KH. Catalysis depends on E242, which acts as the Proton donor. Positions 247 and 313 each coordinate substrate.

The protein belongs to the glycosyl hydrolase 13 family.

It localises to the secreted. It catalyses the reaction Endohydrolysis of (1-&gt;4)-alpha-D-glucosidic linkages in polysaccharides containing three or more (1-&gt;4)-alpha-linked D-glucose units.. This chain is Alpha-amylase, found in Aeromonas hydrophila.